Here is a 149-residue protein sequence, read N- to C-terminus: 3-dehydroquinate dehydratase (149 aa).

Residue Y24 is the Proton acceptor of the active site. Residues N76, H82, and D89 each contribute to the substrate site. The active-site Proton donor is H102. Substrate contacts are provided by residues 103–104 and R113; that span reads LS.

The protein belongs to the type-II 3-dehydroquinase family. In terms of assembly, homododecamer.

The catalysed reaction is 3-dehydroquinate = 3-dehydroshikimate + H2O. It participates in metabolic intermediate biosynthesis; chorismate biosynthesis; chorismate from D-erythrose 4-phosphate and phosphoenolpyruvate: step 3/7. In terms of biological role, catalyzes a trans-dehydration via an enolate intermediate. The polypeptide is 3-dehydroquinate dehydratase (Acinetobacter baylyi (strain ATCC 33305 / BD413 / ADP1)).